We begin with the raw amino-acid sequence, 308 residues long: Protoheme IX farnesyltransferase (308 aa).

The next 9 membrane-spanning stretches (helical) occupy residues 31–51 (VGIVYSNLITTFTGMWLAFYF), 60–80 (LDIVLFTLAGSSLIIAGSCVI), 110–130 (ALWFGILLTALGFIMLLMTNL), 131–151 (TAAGVGFVGVFTYVFLYTMWS), 157–177 (VNTIIGSVSGAVPPLIGWTAV), 185–205 (AWVLFLIMFIWQIPHFLALAI), 232–252 (IIIWIACLMPLPFFLGGLGLP), 253–273 (IVILGTVLNIGWLVCGLVGYR), and 285–305 (FVYSLNYLTIFFVAMVVFTLF).

This sequence belongs to the UbiA prenyltransferase family. Protoheme IX farnesyltransferase subfamily. Interacts with CtaA.

The protein localises to the cell membrane. The enzyme catalyses heme b + (2E,6E)-farnesyl diphosphate + H2O = Fe(II)-heme o + diphosphate. The protein operates within porphyrin-containing compound metabolism; heme O biosynthesis; heme O from protoheme: step 1/1. Converts heme B (protoheme IX) to heme O by substitution of the vinyl group on carbon 2 of heme B porphyrin ring with a hydroxyethyl farnesyl side group. This is Protoheme IX farnesyltransferase from Bacillus licheniformis (strain ATCC 14580 / DSM 13 / JCM 2505 / CCUG 7422 / NBRC 12200 / NCIMB 9375 / NCTC 10341 / NRRL NRS-1264 / Gibson 46).